The primary structure comprises 305 residues: Glycine--tRNA ligase alpha subunit (305 aa).

The protein belongs to the class-II aminoacyl-tRNA synthetase family. In terms of assembly, tetramer of two alpha and two beta subunits.

The protein localises to the cytoplasm. It carries out the reaction tRNA(Gly) + glycine + ATP = glycyl-tRNA(Gly) + AMP + diphosphate. The sequence is that of Glycine--tRNA ligase alpha subunit from Streptococcus pneumoniae serotype 4 (strain ATCC BAA-334 / TIGR4).